The primary structure comprises 439 residues: Probable threonine protease PRSS50 (439 aa).

2 disordered regions span residues Met-1–Ala-22 and Glu-48–Pro-130. An N-terminal signal peptide occupies residues Met-1–Gly-47. A compositionally biased stretch (low complexity) spans Val-9–Gly-21. The Extracellular portion of the chain corresponds to Glu-48 to Pro-415. Residues Arg-51–Pro-61 are compositionally biased toward basic residues. Low complexity predominate over residues Gln-112–Thr-127. 2 N-linked (GlcNAc...) asparagine glycosylation sites follow: Asn-116 and Asn-187. The Peptidase S1 domain occupies Phe-157–Ser-412. Cys-192 and Cys-208 are joined by a disulfide. The active-site Charge relay system is His-207. A glycan (N-linked (GlcNAc...) asparagine) is linked at Asn-226. Asp-260 serves as the catalytic Charge relay system. 3 cysteine pairs are disulfide-bonded: Cys-294/Cys-370, Cys-327/Cys-350, and Cys-360/Cys-388. Residue Thr-364 is the Charge relay system of the active site. The helical transmembrane segment at Leu-416–Leu-436 threads the bilayer. Over Gly-437–Leu-439 the chain is Cytoplasmic.

It belongs to the peptidase S1 family.

It localises to the membrane. Functionally, may be involved in proteolysis through its threonine endopeptidase activity. This chain is Probable threonine protease PRSS50 (Prss50), found in Mus musculus (Mouse).